The sequence spans 363 residues: Regulator of G-protein signaling rgs-3 (363 aa).

The disordered stretch occupies residues 1–70 (MWRSYKAETP…NSSATSPTPS (70 aa)). Residues 21-35 (LNLHDSSESDHEGRQ) show a composition bias toward basic and acidic residues. Composition is skewed to low complexity over residues 36-50 (SRSASITSSTSAPAS) and 58-70 (PITNSSATSPTPS). RGS domains follow at residues 112 to 225 (NCAN…LEYL) and 240 to 359 (SFEG…IDLL).

May be phosphorylated and activated by egl-4.

In terms of biological role, modulates chemotaxis responses by regulating positively the sensitivity to CO2 levels in BAG neurons and by regulating negatively the sensitivity to quinine in ASH sensory neurons. The polypeptide is Regulator of G-protein signaling rgs-3 (rgs-3) (Caenorhabditis elegans).